The primary structure comprises 239 residues: uncharacterized protein (239 aa).

The protein resides in the endoplasmic reticulum. It localises to the golgi apparatus. This is an uncharacterized protein from Schizosaccharomyces pombe (strain 972 / ATCC 24843) (Fission yeast).